Consider the following 296-residue polypeptide: 4-diphosphocytidyl-2-C-methyl-D-erythritol kinase (296 aa).

The active site involves Lys-13. 104-114 provides a ligand contact to ATP; it reads PMGGGIGGGSS. Asp-146 is an active-site residue.

The protein belongs to the GHMP kinase family. IspE subfamily.

The catalysed reaction is 4-CDP-2-C-methyl-D-erythritol + ATP = 4-CDP-2-C-methyl-D-erythritol 2-phosphate + ADP + H(+). Its pathway is isoprenoid biosynthesis; isopentenyl diphosphate biosynthesis via DXP pathway; isopentenyl diphosphate from 1-deoxy-D-xylulose 5-phosphate: step 3/6. Functionally, catalyzes the phosphorylation of the position 2 hydroxy group of 4-diphosphocytidyl-2C-methyl-D-erythritol. This is 4-diphosphocytidyl-2-C-methyl-D-erythritol kinase from Hahella chejuensis (strain KCTC 2396).